We begin with the raw amino-acid sequence, 353 residues long: Photosystem II D2 protein (353 aa).

Thr2 carries the post-translational modification N-acetylthreonine. Position 2 is a phosphothreonine (Thr2). Residues 41 to 61 (CAYFALGGWFTGTTFVTSWYT) traverse the membrane as a helical segment. His118 contributes to the chlorophyll a binding site. A helical transmembrane segment spans residues 125-141 (GFMLRQFELARSVQLRP). Positions 130 and 143 each coordinate pheophytin a. The chain crosses the membrane as a helical span at residues 153 to 166 (VFVSVFLIYPLGQS). His198 provides a ligand contact to chlorophyll a. A helical transmembrane segment spans residues 208 to 228 (AALLCAIHGATVENTLFEDGD). A plastoquinone contacts are provided by His215 and Phe262. His215 contributes to the Fe cation binding site. His269 provides a ligand contact to Fe cation. A helical membrane pass occupies residues 279–295 (GLWMSALGVVGLALNLR).

The protein belongs to the reaction center PufL/M/PsbA/D family. In terms of assembly, PSII is composed of 1 copy each of membrane proteins PsbA, PsbB, PsbC, PsbD, PsbE, PsbF, PsbH, PsbI, PsbJ, PsbK, PsbL, PsbM, PsbT, PsbX, PsbY, PsbZ, Psb30/Ycf12, at least 3 peripheral proteins of the oxygen-evolving complex and a large number of cofactors. It forms dimeric complexes. The D1/D2 heterodimer binds P680, chlorophylls that are the primary electron donor of PSII, and subsequent electron acceptors. It shares a non-heme iron and each subunit binds pheophytin, quinone, additional chlorophylls, carotenoids and lipids. There is also a Cl(-1) ion associated with D1 and D2, which is required for oxygen evolution. The PSII complex binds additional chlorophylls, carotenoids and specific lipids. serves as cofactor.

It localises to the plastid. Its subcellular location is the chloroplast thylakoid membrane. The enzyme catalyses 2 a plastoquinone + 4 hnu + 2 H2O = 2 a plastoquinol + O2. Its function is as follows. Photosystem II (PSII) is a light-driven water:plastoquinone oxidoreductase that uses light energy to abstract electrons from H(2)O, generating O(2) and a proton gradient subsequently used for ATP formation. It consists of a core antenna complex that captures photons, and an electron transfer chain that converts photonic excitation into a charge separation. The D1/D2 (PsbA/PsbD) reaction center heterodimer binds P680, the primary electron donor of PSII as well as several subsequent electron acceptors. D2 is needed for assembly of a stable PSII complex. The protein is Photosystem II D2 protein of Ranunculus macranthus (Large buttercup).